Reading from the N-terminus, the 354-residue chain is MNGTEGPYFNVPMVNTTGIVRSPYEYPQYYLVSPAAYAALGAYMFFLILVGFPINFLTLYVTLEHKKLRTPLNYILLNLAVADLFMVFGGFTTTMYTSMHGYFVLGRLGCNLEGFFATLGGEIGLWSLVVLAIERWVVVCKPISNFRFGENHAIMGLVFTWIMAASCAVPPLVGWSRYIPEGMQCSCGVDYYTRAEGFNNESFVVYMFVCHFLIPLIVVFFCYGRLLCAVKEAAAAQQESETTQRAEREVTRMVVIMVIGFLVCWLPYASVAWYIFTNQGSEFGPLFMTIPAFFAKSSSIYNPAIYICMNKQFRNCMITTLCCGKNPFEEEEGASTTASKTEASSVSSSSVSPA.

Residues 1–36 lie on the Extracellular side of the membrane; sequence MNGTEGPYFNVPMVNTTGIVRSPYEYPQYYLVSPAA. Asparagine 2 and asparagine 15 each carry an N-linked (GlcNAc...) asparagine glycan. A helical transmembrane segment spans residues 37-61; the sequence is YAALGAYMFFLILVGFPINFLTLYV. Residues 62-73 are Cytoplasmic-facing; the sequence is TLEHKKLRTPLN. A helical transmembrane segment spans residues 74-96; sequence YILLNLAVADLFMVFGGFTTTMY. Residues 97–110 are Extracellular-facing; the sequence is TSMHGYFVLGRLGC. A disulfide bond links cysteine 110 and cysteine 187. A helical transmembrane segment spans residues 111–133; it reads NLEGFFATLGGEIGLWSLVVLAI. The 'Ionic lock' involved in activated form stabilization motif lies at 134 to 136; the sequence is ERW. Residues 134–152 lie on the Cytoplasmic side of the membrane; it reads ERWVVVCKPISNFRFGENH. A helical membrane pass occupies residues 153-173; it reads AIMGLVFTWIMAASCAVPPLV. The Extracellular segment spans residues 174 to 202; sequence GWSRYIPEGMQCSCGVDYYTRAEGFNNES. Residues 203–224 traverse the membrane as a helical segment; that stretch reads FVVYMFVCHFLIPLIVVFFCYG. The Cytoplasmic portion of the chain corresponds to 225–252; it reads RLLCAVKEAAAAQQESETTQRAEREVTR. A helical transmembrane segment spans residues 253–274; that stretch reads MVVIMVIGFLVCWLPYASVAWY. The Extracellular segment spans residues 275–286; the sequence is IFTNQGSEFGPL. A helical transmembrane segment spans residues 287 to 308; that stretch reads FMTIPAFFAKSSSIYNPAIYIC. Lysine 296 is modified (N6-(retinylidene)lysine). Residues 309–354 are Cytoplasmic-facing; that stretch reads MNKQFRNCMITTLCCGKNPFEEEEGASTTASKTEASSVSSSSVSPA. 2 S-palmitoyl cysteine lipidation sites follow: cysteine 322 and cysteine 323. Residues 332–354 form a disordered region; sequence EGASTTASKTEASSVSSSSVSPA. Residues 334 to 354 are compositionally biased toward low complexity; sequence ASTTASKTEASSVSSSSVSPA.

This sequence belongs to the G-protein coupled receptor 1 family. Opsin subfamily. In terms of processing, phosphorylated on some or all of the serine and threonine residues present in the C-terminal region. Contains one covalently linked retinal chromophore.

It localises to the membrane. The protein localises to the cell projection. It is found in the cilium. The protein resides in the photoreceptor outer segment. Photoreceptor required for image-forming vision at low light intensity. While most salt water fish species use retinal as chromophore, most freshwater fish use 3-dehydroretinal, or a mixture of retinal and 3-dehydroretinal. Light-induced isomerization of 11-cis to all-trans retinal triggers a conformational change that activates signaling via G-proteins. Subsequent receptor phosphorylation mediates displacement of the bound G-protein alpha subunit by arrestin and terminates signaling. In Oryzias latipes (Japanese rice fish), this protein is Rhodopsin (rho).